The sequence spans 79 residues: U-myrmeciitoxin(01)-Mg9a (79 aa).

A signal peptide spans 1–21 (MKLSCLLLTLAIIFVLTIVHA). A propeptide spanning residues 22 to 48 (PNVEAKALANPESDAIGFADAVGEADP) is cleaved from the precursor. Gln78 is modified (glutamine amide).

As to expression, expressed by the venom gland.

It localises to the secreted. Its function is as follows. May have antimicrobial properties, like most ant linear peptides. The protein is U-myrmeciitoxin(01)-Mg9a of Myrmecia gulosa (Red bulldog ant).